The primary structure comprises 1207 residues: DNA-directed RNA polymerase subunit beta' (1207 aa).

Zn(2+) contacts are provided by cysteine 60, cysteine 62, cysteine 75, and cysteine 78. Mg(2+)-binding residues include aspartate 449, aspartate 451, and aspartate 453. Cysteine 822, cysteine 896, cysteine 903, and cysteine 906 together coordinate Zn(2+).

This sequence belongs to the RNA polymerase beta' chain family. In terms of assembly, the RNAP catalytic core consists of 2 alpha, 1 beta, 1 beta' and 1 omega subunit. When a sigma factor is associated with the core the holoenzyme is formed, which can initiate transcription. The cofactor is Mg(2+). Zn(2+) serves as cofactor.

The catalysed reaction is RNA(n) + a ribonucleoside 5'-triphosphate = RNA(n+1) + diphosphate. DNA-dependent RNA polymerase catalyzes the transcription of DNA into RNA using the four ribonucleoside triphosphates as substrates. The chain is DNA-directed RNA polymerase subunit beta' from Staphylococcus aureus (strain USA300).